A 206-amino-acid polypeptide reads, in one-letter code: Outer-membrane lipoprotein carrier protein (206 aa).

Positions 1–20 (MFYLIKKLPKFILFSLYLYA) are cleaved as a signal peptide.

It belongs to the LolA family. Monomer.

It localises to the periplasm. Functionally, participates in the translocation of lipoproteins from the inner membrane to the outer membrane. Only forms a complex with a lipoprotein if the residue after the N-terminal Cys is not an aspartate (The Asp acts as a targeting signal to indicate that the lipoprotein should stay in the inner membrane). The polypeptide is Outer-membrane lipoprotein carrier protein (Wigglesworthia glossinidia brevipalpis).